Consider the following 193-residue polypeptide: Protein GrpE (193 aa).

Residues 1-26 form a disordered region; the sequence is MTKKHHKEQEEIQETIKTEAAEENVG. The segment covering 7 to 20 has biased composition (basic and acidic residues); sequence KEQEEIQETIKTEA.

Belongs to the GrpE family. Homodimer.

Its subcellular location is the cytoplasm. Its function is as follows. Participates actively in the response to hyperosmotic and heat shock by preventing the aggregation of stress-denatured proteins, in association with DnaK and GrpE. It is the nucleotide exchange factor for DnaK and may function as a thermosensor. Unfolded proteins bind initially to DnaJ; upon interaction with the DnaJ-bound protein, DnaK hydrolyzes its bound ATP, resulting in the formation of a stable complex. GrpE releases ADP from DnaK; ATP binding to DnaK triggers the release of the substrate protein, thus completing the reaction cycle. Several rounds of ATP-dependent interactions between DnaJ, DnaK and GrpE are required for fully efficient folding. This Chlorobaculum parvum (strain DSM 263 / NCIMB 8327) (Chlorobium vibrioforme subsp. thiosulfatophilum) protein is Protein GrpE.